The sequence spans 230 residues: Heptaprenylglyceryl phosphate synthase (230 aa).

Lys12 serves as a coordination point for sn-glycerol 1-phosphate. Residues Asp14 and Thr40 each coordinate Mg(2+). Sn-glycerol 1-phosphate-binding positions include 159–164, Gly189, and 209–210; these read YIEYSG and GD.

Belongs to the GGGP/HepGP synthase family. Group I subfamily. As to quaternary structure, homodimer. It depends on Mg(2+) as a cofactor.

It catalyses the reaction sn-glycerol 1-phosphate + all-trans-heptaprenyl diphosphate = 3-heptaprenyl-sn-glycero-1-phosphate + diphosphate. It participates in membrane lipid metabolism; glycerophospholipid metabolism. Its function is as follows. Prenyltransferase that catalyzes in vivo the transfer of the heptaprenyl moiety of heptaprenyl pyrophosphate (HepPP; 35 carbon atoms) to the C3 hydroxyl of sn-glycerol-1-phosphate (G1P), producing heptaprenylglyceryl phosphate (HepGP). This reaction is an ether-bond-formation step in the biosynthesis of archaea-type G1P-based membrane lipids found in Bacillales. The polypeptide is Heptaprenylglyceryl phosphate synthase (Staphylococcus aureus (strain MRSA252)).